Consider the following 326-residue polypeptide: MTFGIEFVPSDPVLKIAHYAKLAEQQGFDNVWITDHYNNRDVYSTLTVLAMNTNSIKLGTGVTNPYTRNAAITASSIGSLNEISGGRAILGLGPGEQATFDAMGISWEQPLTTTKESIAAIRGFLAGEKVTMDGDMIKFGGAKMAFKAGDVPIYMGAQGPKMLELAGEVSDGVLINASHPKDFEVAVKQIAAGAKKAGRDPKEVDVAAYACFSIDKDAAKAKSAAQIVVAFIVAGSPDMVLERHGIDPAAKADIGGAIAKGDFGALMGGMVTDSMMDAFSICGTPDDCKARINELLDIGVTQIVAGSPIGPNKEKAIKLIGKEIIG.

Belongs to the mer family.

It localises to the cytoplasm. The catalysed reaction is 5-methyl-5,6,7,8-tetrahydromethanopterin + oxidized coenzyme F420-(gamma-L-Glu)(n) + H(+) = 5,10-methylenetetrahydromethanopterin + reduced coenzyme F420-(gamma-L-Glu)(n). It participates in one-carbon metabolism; methanogenesis from CO(2); methyl-coenzyme M from 5,10-methylene-5,6,7,8-tetrahydromethanopterin: step 1/2. Its function is as follows. Catalyzes the reversible reduction of methylene-H(4)MPT to methyl-H(4)MPT. The sequence is that of 5,10-methylenetetrahydromethanopterin reductase from Methanolobus tindarius.